A 61-amino-acid polypeptide reads, in one-letter code: DNA-directed RNA polymerase subunit Rpo6 (61 aa).

This sequence belongs to the archaeal Rpo6/eukaryotic RPB6 RNA polymerase subunit family. As to quaternary structure, part of the RNA polymerase complex.

The protein localises to the cytoplasm. It catalyses the reaction RNA(n) + a ribonucleoside 5'-triphosphate = RNA(n+1) + diphosphate. Its function is as follows. DNA-dependent RNA polymerase (RNAP) catalyzes the transcription of DNA into RNA using the four ribonucleoside triphosphates as substrates. The protein is DNA-directed RNA polymerase subunit Rpo6 of Thermoplasma volcanium (strain ATCC 51530 / DSM 4299 / JCM 9571 / NBRC 15438 / GSS1).